The chain runs to 345 residues: tRNA N6-adenosine threonylcarbamoyltransferase (345 aa).

Residues H111 and H115 each contribute to the Fe cation site. Residues 136–140 (LVSGG), D169, G182, and N279 contribute to the substrate site. D307 is a binding site for Fe cation.

The protein belongs to the KAE1 / TsaD family. Fe(2+) serves as cofactor.

Its subcellular location is the cytoplasm. The catalysed reaction is L-threonylcarbamoyladenylate + adenosine(37) in tRNA = N(6)-L-threonylcarbamoyladenosine(37) in tRNA + AMP + H(+). Its function is as follows. Required for the formation of a threonylcarbamoyl group on adenosine at position 37 (t(6)A37) in tRNAs that read codons beginning with adenine. Is involved in the transfer of the threonylcarbamoyl moiety of threonylcarbamoyl-AMP (TC-AMP) to the N6 group of A37, together with TsaE and TsaB. TsaD likely plays a direct catalytic role in this reaction. This chain is tRNA N6-adenosine threonylcarbamoyltransferase, found in Actinobacillus succinogenes (strain ATCC 55618 / DSM 22257 / CCUG 43843 / 130Z).